A 209-amino-acid chain; its full sequence is Probable L-serine dehydratase, alpha chain (209 aa).

This sequence belongs to the iron-sulfur dependent L-serine dehydratase family. Heterodimer of an alpha chain and a beta chain. The cofactor is [4Fe-4S] cluster.

It carries out the reaction L-serine = pyruvate + NH4(+). It participates in carbohydrate biosynthesis; gluconeogenesis. The protein is Probable L-serine dehydratase, alpha chain (sdhA) of Latilactobacillus sakei (Lactobacillus sakei).